Consider the following 710-residue polypeptide: PC3-like endoprotease variant B (710 aa).

A signal peptide spans 1 to 29; the sequence is MNYRGIYRRRYVFVLLLLVAVVNISYGWT. 3 N-linked (GlcNAc...) asparagine glycosylation sites follow: N23, N62, and N190. Residues 30–152 constitute a propeptide that is removed on maturation; it reads VLKNKDYKRR…QQKILERVKR (123 aa). The Peptidase S8 domain maps to 164-486; sequence MWYLLNTGQA…FGRLDANAMV (323 aa). Catalysis depends on charge relay system residues D202 and H242. Cystine bridges form between C259/C411 and C351/C381. S419 (charge relay system) is an active-site residue. Positions 495 to 638 constitute a P/Homo B domain; sequence LPAQRKCTAA…EERVIDTQTK (144 aa). Cysteines 501 and 527 form a disulfide. The disordered stretch occupies residues 668–710; that stretch reads TIEGSTQDHVKPKEGAKEPWGNYRNTNNINNNSSTAFKRKKKQ. Over residues 673-684 the composition is skewed to basic and acidic residues; sequence TQDHVKPKEGAK. Low complexity predominate over residues 689–699; that stretch reads NYRNTNNINNN. N698 and N699 each carry an N-linked (GlcNAc...) asparagine glycan.

Belongs to the peptidase S8 family. Furin subfamily. Predominantly in the body column.

In terms of biological role, probably involved in the processing of hormone and other protein precursors at sites comprised of pairs of basic amino acid residues. In Hydra vulgaris (Hydra), this protein is PC3-like endoprotease variant B.